The chain runs to 170 residues: Peptide deformylase (170 aa).

Cysteine 93 and histidine 135 together coordinate Fe cation. Glutamate 136 is a catalytic residue. Histidine 139 is a binding site for Fe cation.

The protein belongs to the polypeptide deformylase family. The cofactor is Fe(2+).

It catalyses the reaction N-terminal N-formyl-L-methionyl-[peptide] + H2O = N-terminal L-methionyl-[peptide] + formate. Functionally, removes the formyl group from the N-terminal Met of newly synthesized proteins. Requires at least a dipeptide for an efficient rate of reaction. N-terminal L-methionine is a prerequisite for activity but the enzyme has broad specificity at other positions. In Acidobacterium capsulatum (strain ATCC 51196 / DSM 11244 / BCRC 80197 / JCM 7670 / NBRC 15755 / NCIMB 13165 / 161), this protein is Peptide deformylase.